We begin with the raw amino-acid sequence, 197 residues long: ATP-dependent Clp protease proteolytic subunit (197 aa).

Ser98 functions as the Nucleophile in the catalytic mechanism. His123 is a catalytic residue.

It belongs to the peptidase S14 family. Fourteen ClpP subunits assemble into 2 heptameric rings which stack back to back to give a disk-like structure with a central cavity, resembling the structure of eukaryotic proteasomes.

It is found in the cytoplasm. The catalysed reaction is Hydrolysis of proteins to small peptides in the presence of ATP and magnesium. alpha-casein is the usual test substrate. In the absence of ATP, only oligopeptides shorter than five residues are hydrolyzed (such as succinyl-Leu-Tyr-|-NHMec, and Leu-Tyr-Leu-|-Tyr-Trp, in which cleavage of the -Tyr-|-Leu- and -Tyr-|-Trp bonds also occurs).. Its function is as follows. Cleaves peptides in various proteins in a process that requires ATP hydrolysis. Has a chymotrypsin-like activity. Plays a major role in the degradation of misfolded proteins. The protein is ATP-dependent Clp protease proteolytic subunit of Enterococcus faecalis (strain ATCC 700802 / V583).